Consider the following 236-residue polypeptide: Leucyl/phenylalanyl-tRNA--protein transferase (236 aa).

This sequence belongs to the L/F-transferase family.

Its subcellular location is the cytoplasm. The enzyme catalyses N-terminal L-lysyl-[protein] + L-leucyl-tRNA(Leu) = N-terminal L-leucyl-L-lysyl-[protein] + tRNA(Leu) + H(+). It catalyses the reaction N-terminal L-arginyl-[protein] + L-leucyl-tRNA(Leu) = N-terminal L-leucyl-L-arginyl-[protein] + tRNA(Leu) + H(+). It carries out the reaction L-phenylalanyl-tRNA(Phe) + an N-terminal L-alpha-aminoacyl-[protein] = an N-terminal L-phenylalanyl-L-alpha-aminoacyl-[protein] + tRNA(Phe). Functionally, functions in the N-end rule pathway of protein degradation where it conjugates Leu, Phe and, less efficiently, Met from aminoacyl-tRNAs to the N-termini of proteins containing an N-terminal arginine or lysine. The protein is Leucyl/phenylalanyl-tRNA--protein transferase of Shewanella sp. (strain MR-4).